The sequence spans 362 residues: Chorismate synthase (362 aa).

The tract at residues Ala-39 to Arg-59 is disordered. NADP(+) contacts are provided by Arg-48 and Arg-54. Residues Arg-125 to Ser-127, Asn-238 to Ala-239, Gly-278, Lys-293 to Ser-297, and Arg-319 contribute to the FMN site.

The protein belongs to the chorismate synthase family. As to quaternary structure, homotetramer. It depends on FMNH2 as a cofactor.

It carries out the reaction 5-O-(1-carboxyvinyl)-3-phosphoshikimate = chorismate + phosphate. It functions in the pathway metabolic intermediate biosynthesis; chorismate biosynthesis; chorismate from D-erythrose 4-phosphate and phosphoenolpyruvate: step 7/7. Functionally, catalyzes the anti-1,4-elimination of the C-3 phosphate and the C-6 proR hydrogen from 5-enolpyruvylshikimate-3-phosphate (EPSP) to yield chorismate, which is the branch point compound that serves as the starting substrate for the three terminal pathways of aromatic amino acid biosynthesis. This reaction introduces a second double bond into the aromatic ring system. The protein is Chorismate synthase of Aeromonas hydrophila subsp. hydrophila (strain ATCC 7966 / DSM 30187 / BCRC 13018 / CCUG 14551 / JCM 1027 / KCTC 2358 / NCIMB 9240 / NCTC 8049).